Consider the following 154-residue polypeptide: Myoglobin (154 aa).

One can recognise a Globin domain in the interval 2-148 (GLSDGEWQLV…FRNDIAAKYK (147 aa)). S4 carries the post-translational modification Phosphoserine. H65 serves as a coordination point for nitrite. H65 lines the O2 pocket. Residue T68 is modified to Phosphothreonine. H94 contributes to the heme b binding site.

This sequence belongs to the globin family. As to quaternary structure, monomeric.

Its subcellular location is the cytoplasm. It localises to the sarcoplasm. It carries out the reaction Fe(III)-heme b-[protein] + nitric oxide + H2O = Fe(II)-heme b-[protein] + nitrite + 2 H(+). It catalyses the reaction H2O2 + AH2 = A + 2 H2O. Functionally, monomeric heme protein which primary function is to store oxygen and facilitate its diffusion within muscle tissues. Reversibly binds oxygen through a pentacoordinated heme iron and enables its timely and efficient release as needed during periods of heightened demand. Depending on the oxidative conditions of tissues and cells, and in addition to its ability to bind oxygen, it also has a nitrite reductase activity whereby it regulates the production of bioactive nitric oxide. Under stress conditions, like hypoxia and anoxia, it also protects cells against reactive oxygen species thanks to its pseudoperoxidase activity. The polypeptide is Myoglobin (MB) (Ondatra zibethicus (Muskrat)).